The sequence spans 296 residues: Nitrogenase iron protein (296 aa).

G12–S19 provides a ligand contact to ATP. Position 100 (C100) interacts with [4Fe-4S] cluster. R103 is subject to ADP-ribosylarginine; by dinitrogenase reductase ADP-ribosyltransferase. C134 serves as a coordination point for [4Fe-4S] cluster.

It belongs to the NifH/BchL/ChlL family. As to quaternary structure, homodimer. The cofactor is [4Fe-4S] cluster. In terms of processing, the reversible ADP-ribosylation of Arg-103 inactivates the nitrogenase reductase and regulates nitrogenase activity.

The enzyme catalyses N2 + 8 reduced [2Fe-2S]-[ferredoxin] + 16 ATP + 16 H2O = H2 + 8 oxidized [2Fe-2S]-[ferredoxin] + 2 NH4(+) + 16 ADP + 16 phosphate + 6 H(+). In terms of biological role, the key enzymatic reactions in nitrogen fixation are catalyzed by the nitrogenase complex, which has 2 components: the iron protein and the molybdenum-iron protein. In Acidithiobacillus ferrooxidans (strain ATCC 23270 / DSM 14882 / CIP 104768 / NCIMB 8455) (Ferrobacillus ferrooxidans (strain ATCC 23270)), this protein is Nitrogenase iron protein.